Consider the following 479-residue polypeptide: Aspartyl/glutamyl-tRNA(Asn/Gln) amidotransferase subunit B (479 aa).

It belongs to the GatB/GatE family. GatB subfamily. Heterotrimer of A, B and C subunits.

The enzyme catalyses L-glutamyl-tRNA(Gln) + L-glutamine + ATP + H2O = L-glutaminyl-tRNA(Gln) + L-glutamate + ADP + phosphate + H(+). It carries out the reaction L-aspartyl-tRNA(Asn) + L-glutamine + ATP + H2O = L-asparaginyl-tRNA(Asn) + L-glutamate + ADP + phosphate + 2 H(+). Allows the formation of correctly charged Asn-tRNA(Asn) or Gln-tRNA(Gln) through the transamidation of misacylated Asp-tRNA(Asn) or Glu-tRNA(Gln) in organisms which lack either or both of asparaginyl-tRNA or glutaminyl-tRNA synthetases. The reaction takes place in the presence of glutamine and ATP through an activated phospho-Asp-tRNA(Asn) or phospho-Glu-tRNA(Gln). This chain is Aspartyl/glutamyl-tRNA(Asn/Gln) amidotransferase subunit B, found in Alcanivorax borkumensis (strain ATCC 700651 / DSM 11573 / NCIMB 13689 / SK2).